Consider the following 89-residue polypeptide: MFAIMTVTGQDHTGIIAAVSTALAELDVNIHNVSQTIMDQWFTMILHVGFDESVLDIATVQERMKPVEKEQGLVIRIQSEALFNAVNEI.

The ACT domain maps to 4–82; the sequence is IMTVTGQDHT…LVIRIQSEAL (79 aa).

It belongs to the UPF0237 family.

In Corynebacterium glutamicum (strain ATCC 13032 / DSM 20300 / JCM 1318 / BCRC 11384 / CCUG 27702 / LMG 3730 / NBRC 12168 / NCIMB 10025 / NRRL B-2784 / 534), this protein is UPF0237 protein Cgl1544/cg1742.